A 225-amino-acid chain; its full sequence is NAD(P)H-quinone oxidoreductase subunit K, chloroplastic (225 aa).

The [4Fe-4S] cluster site is built by Cys-43, Cys-44, Cys-108, and Cys-139.

The protein belongs to the complex I 20 kDa subunit family. NDH is composed of at least 16 different subunits, 5 of which are encoded in the nucleus. It depends on [4Fe-4S] cluster as a cofactor.

It localises to the plastid. The protein resides in the chloroplast thylakoid membrane. It carries out the reaction a plastoquinone + NADH + (n+1) H(+)(in) = a plastoquinol + NAD(+) + n H(+)(out). The catalysed reaction is a plastoquinone + NADPH + (n+1) H(+)(in) = a plastoquinol + NADP(+) + n H(+)(out). Its function is as follows. NDH shuttles electrons from NAD(P)H:plastoquinone, via FMN and iron-sulfur (Fe-S) centers, to quinones in the photosynthetic chain and possibly in a chloroplast respiratory chain. The immediate electron acceptor for the enzyme in this species is believed to be plastoquinone. Couples the redox reaction to proton translocation, and thus conserves the redox energy in a proton gradient. This is NAD(P)H-quinone oxidoreductase subunit K, chloroplastic from Draba nemorosa (Woodland whitlowgrass).